A 178-amino-acid polypeptide reads, in one-letter code: Nascent polypeptide-associated complex subunit alpha (178 aa).

An NAC-A/B domain is found at 16–80 (PKNEKKAREL…AKVDDMNQRI (65 aa)). Positions 82 to 100 (EAQAQQAQQEALQKAAADA) are enriched in low complexity. The tract at residues 82-145 (EAQAQQAQQE…DETGLDPKDI (64 aa)) is disordered. The span at 101 to 126 (GKTEDKSPEAITADLEKASLGDKKAE) shows a compositional bias: basic and acidic residues. Acidic residues predominate over residues 127 to 139 (DEEEDEGEIDETG). The UBA domain maps to 140–178 (LDPKDIEIVVEQTQVSRAKAVKALRNHDGDMVNAIMDLS).

It belongs to the NAC-alpha family. As to quaternary structure, part of the nascent polypeptide-associated complex (NAC), consisting of EGD2 and EGD1. NAC associates with ribosomes via EGD1.

It is found in the cytoplasm. It localises to the nucleus. Component of the nascent polypeptide-associated complex (NAC), a dynamic component of the ribosomal exit tunnel, protecting the emerging polypeptides from interaction with other cytoplasmic proteins to ensure appropriate nascent protein targeting. The NAC complex also promotes mitochondrial protein import by enhancing productive ribosome interactions with the outer mitochondrial membrane and blocks the inappropriate interaction of ribosomes translating non-secretory nascent polypeptides with translocation sites in the membrane of the endoplasmic reticulum. EGD2 may also be involved in transcription regulation. This Candida albicans (strain SC5314 / ATCC MYA-2876) (Yeast) protein is Nascent polypeptide-associated complex subunit alpha (EGD2).